Here is a 150-residue protein sequence, read N- to C-terminus: 1,4-dihydroxy-2-naphthoyl-CoA hydrolase (150 aa).

D19 is an active-site residue.

The protein belongs to the 4-hydroxybenzoyl-CoA thioesterase family. DHNA-CoA hydrolase subfamily.

The enzyme catalyses 1,4-dihydroxy-2-naphthoyl-CoA + H2O = 1,4-dihydroxy-2-naphthoate + CoA + H(+). Its pathway is cofactor biosynthesis; phylloquinone biosynthesis. It functions in the pathway quinol/quinone metabolism; 1,4-dihydroxy-2-naphthoate biosynthesis; 1,4-dihydroxy-2-naphthoate from chorismate: step 7/7. Catalyzes the hydrolysis of 1,4-dihydroxy-2-naphthoyl-CoA (DHNA-CoA) to 1,4-dihydroxy-2-naphthoate (DHNA), a reaction involved in phylloquinone (vitamin K1) biosynthesis. This Prochlorococcus marinus (strain AS9601) protein is 1,4-dihydroxy-2-naphthoyl-CoA hydrolase.